Here is a 138-residue protein sequence, read N- to C-terminus: Putative pre-16S rRNA nuclease (138 aa).

This sequence belongs to the YqgF nuclease family.

The protein localises to the cytoplasm. Functionally, could be a nuclease involved in processing of the 5'-end of pre-16S rRNA. The polypeptide is Putative pre-16S rRNA nuclease (Geobacillus thermodenitrificans (strain NG80-2)).